A 630-amino-acid polypeptide reads, in one-letter code: MKDKIPTDYDRYLFHQGSHYKSYEFLGAHPCEENGKTGVRFSVWAPNAAEVRVIGSFNNWDGNINPMERINDSGIWTTFIPEAKKGDLYKYEILTKYGDTRIKSDPYAFYAERKPKTASIVYSLNNYKWNDKKWMDKKKDYTVYNKPVLIYEVHLGSWKRKENGDYLTYRELANELVEYVKDMGYNYIELLPVAEHPFDGSWGYQLTNYYSVTSRYGTPEDFMYFIDKCHQNGIGVILDWVPGHFCKDDHGLRLFDGTALYEPQDPRKAENEWDTLNFDFNQPEVWSFLISNAVFWFDIYHIDGLRVDAVSNLLYLNHGKGDGEWVPNKYGGHENLEAIDFIKTLNKVIFEYFPNPLMIAEESSAWPLVTYPAHLGGLGFNYKWNMGWMNDTLEYMEMDSIYRKYHHNLLTFSFMYMFSENFVLPLSHDEVVHGKKSLLDKMPGDYWQKFANLRTLYGYMMGHPGKKLLFMGGEFGQFIEWNYKQGLDWLLLDYDMHKKLQNYVRELNYFYRQEKTLWEGDHEDGGFEWIDPHDSEQSIITFMRKNKDGSDYTIIVCNFTPEVRHNYRIGVPEFKEYKEVFNSDLEKFGGSGQKNSTIIQPSEQPWHNRPYSIEITIPPLATIFFKPLNQ.

The Nucleophile role is filled by aspartate 308. Glutamate 361 serves as the catalytic Proton donor.

The protein belongs to the glycosyl hydrolase 13 family. GlgB subfamily. In terms of assembly, monomer.

It carries out the reaction Transfers a segment of a (1-&gt;4)-alpha-D-glucan chain to a primary hydroxy group in a similar glucan chain.. It participates in glycan biosynthesis; glycogen biosynthesis. Its function is as follows. Catalyzes the formation of the alpha-1,6-glucosidic linkages in glycogen by scission of a 1,4-alpha-linked oligosaccharide from growing alpha-1,4-glucan chains and the subsequent attachment of the oligosaccharide to the alpha-1,6 position. The polypeptide is 1,4-alpha-glucan branching enzyme GlgB (Halothermothrix orenii (strain H 168 / OCM 544 / DSM 9562)).